A 205-amino-acid polypeptide reads, in one-letter code: Large ribosomal subunit protein bL21 (205 aa).

The interval Ala-107 to Ala-137 is disordered. Over residues Ala-122 to Ala-137 the composition is skewed to low complexity.

Belongs to the bacterial ribosomal protein bL21 family. Part of the 50S ribosomal subunit. Contacts protein L20.

Functionally, this protein binds to 23S rRNA in the presence of protein L20. The protein is Large ribosomal subunit protein bL21 of Hyphomonas neptunium (strain ATCC 15444).